A 396-amino-acid polypeptide reads, in one-letter code: Elongation factor Tu (396 aa).

Residues 10 to 206 (KPHVNVGTIG…ALDTYIPTPE (197 aa)) form the tr-type G domain. The segment at 19–26 (GHVDHGKT) is G1. 19-26 (GHVDHGKT) is a binding site for GTP. Thr-26 contacts Mg(2+). The interval 60–64 (GITIN) is G2. A G3 region spans residues 81–84 (DCPG). Residues 81-85 (DCPGH) and 136-139 (NKCD) contribute to the GTP site. Residues 136 to 139 (NKCD) form a G4 region. The segment at 174–176 (SAK) is G5.

The protein belongs to the TRAFAC class translation factor GTPase superfamily. Classic translation factor GTPase family. EF-Tu/EF-1A subfamily. Monomer.

Its subcellular location is the cytoplasm. The catalysed reaction is GTP + H2O = GDP + phosphate + H(+). Its function is as follows. GTP hydrolase that promotes the GTP-dependent binding of aminoacyl-tRNA to the A-site of ribosomes during protein biosynthesis. The protein is Elongation factor Tu of Burkholderia vietnamiensis (strain G4 / LMG 22486) (Burkholderia cepacia (strain R1808)).